A 400-amino-acid polypeptide reads, in one-letter code: Involucrin (400 aa).

Disordered stretches follow at residues 1–196 (MSQQ…HLKQ), 273–312 (KEEV…EQQL), and 333–381 (KRDE…KGEV). 3 stretches are compositionally biased toward low complexity: residues 78-159 (QQQQ…QQHQ), 169-186 (EQQQ…GQQE), and 279-292 (EQQQ…QQHQ). The span at 333-344 (KRDEQLGKKEEQ) shows a compositional bias: basic and acidic residues. Low complexity predominate over residues 346-358 (LEPSEQQEGLLEQ).

The protein belongs to the involucrin family. As to quaternary structure, directly or indirectly cross-linked to cornifelin (CNFN). Substrate of transglutaminase. Specific glutamines or lysines are cross-linked to keratins, desmoplakin and to inter involucrin molecules. As to expression, keratinocytes of epidermis and other stratified squamous epithelia.

Its subcellular location is the cytoplasm. Functionally, part of the insoluble cornified cell envelope (CE) of stratified squamous epithelia. The chain is Involucrin (IVL) from Tupaia glis (Common tree shrew).